The primary structure comprises 893 residues: MSGHDSKYFSTTKKGEIPELKEELNSQYKDKRKDAVKKVIAAMTVGKDVSSLFTDVVNCMQTENLELKKLVYLYLINYAKSQPDLAILAVNTFVKDSQDPNPLIRALAVRTMGCIRVDKITEYLCDPLQKCLKDDDPYVRKTAAICVAKLFDINAELVEDRGFLEALKDLISDNNPMVVANAVAALAEIQENSTSPIFEINSTILTKLLTALNECTEWGQVFILDALSRYKASDPREAENIVERVTPRLQHANCAVVLSAVKMILQQMELITSTDVIRNLCKKMAPPLVTLLSAEPEIQYVALRNINLIVQKRPTILAHEIKVFFCKYNDPIYVKMEKLEIMIKLASDRNIDQVLLEFKEYATEVDVDFVRKAVRAIGRCAIKLERAAERCISVLLELIKIKVNYVVQEAIIVIKDIFRRYPNTYESIIATLCESLDTLDEPEAKASMIWIIGEYAERIDNADELLESFLENFPEEPAQVQLQLLTATVKLFLKKPTEGPQQMIQVVLNNATVETDNPDLRDRAYIYWRLLSTDPEAAKDVVLAEKPVITDDSNQLDPSLLDELLANISTLSSVYHKPPEAFVTRLKTTVQKTEDEDYVEGSETGYPEASGNPVDGAASPSATTGYVTKLAAAPAPVPDLLGDLMGSDNAAIVPVDEPTTPSGRPLPVVLPASKGQGLQISAQLTRQDGQVFYSMLLENNSQSLLDGFMIQFNKNSFGLAAVGSLQVPPLQPGASARTMMPMVLSQNMSTGSTSSVLQVAVKNNQQPVWYFEDKIVLNALFSEDGRMERGTFLETWKSLPDSNEVQKEFPGITITSVESTLDLLAASNMFFIAKRKNGNQDVLYLSAKVPRGIPFLIELTAIVGQPGLKCAVKTPTPEIAPLFFEAVEILFKA.

The tract at residues 593 to 621 is disordered; that stretch reads TEDEDYVEGSETGYPEASGNPVDGAASPS.

Belongs to the adaptor complexes large subunit family. In terms of assembly, adaptor protein complexes are heterotetramers composed of two large adaptins (beta-type subunit and alpha-type or delta-type or epsilon-type or gamma-type subunit), a medium adaptin (mu-type subunit) and a small adaptin (sigma-type subunit).

Its subcellular location is the golgi apparatus. The protein resides in the trans-Golgi network. It localises to the cytoplasmic vesicle. The protein localises to the clathrin-coated vesicle membrane. Functionally, subunit of clathrin-associated adaptor protein complex that plays a role in protein sorting in the late-Golgi/trans-Golgi network (TGN) and/or endosomes. The AP complexes mediate both the recruitment of clathrin to membranes and the recognition of sorting signals within the cytosolic tails of transmembrane cargo molecules. This is Beta-adaptin-like protein C (BETAC-AD) from Arabidopsis thaliana (Mouse-ear cress).